The primary structure comprises 176 residues: Acireductone dioxygenase (176 aa).

H81, H83, E87, and H126 together coordinate Fe(2+). Ni(2+) is bound by residues H81, H83, E87, and H126.

Belongs to the acireductone dioxygenase (ARD) family. The cofactor is Fe(2+). Requires Ni(2+) as cofactor.

It is found in the cytoplasm. It localises to the nucleus. It catalyses the reaction 1,2-dihydroxy-5-(methylsulfanyl)pent-1-en-3-one + O2 = 4-methylsulfanyl-2-oxobutanoate + formate + 2 H(+). The enzyme catalyses 1,2-dihydroxy-5-(methylsulfanyl)pent-1-en-3-one + O2 = 3-(methylsulfanyl)propanoate + CO + formate + 2 H(+). It functions in the pathway amino-acid biosynthesis; L-methionine biosynthesis via salvage pathway; L-methionine from S-methyl-5-thio-alpha-D-ribose 1-phosphate: step 5/6. Its function is as follows. Catalyzes 2 different reactions between oxygen and the acireductone 1,2-dihydroxy-3-keto-5-methylthiopentene (DHK-MTPene) depending upon the metal bound in the active site. Fe-containing acireductone dioxygenase (Fe-ARD) produces formate and 2-keto-4-methylthiobutyrate (KMTB), the alpha-ketoacid precursor of methionine in the methionine recycle pathway. Ni-containing acireductone dioxygenase (Ni-ARD) produces methylthiopropionate, carbon monoxide and formate, and does not lie on the methionine recycle pathway. In Sclerotinia sclerotiorum (strain ATCC 18683 / 1980 / Ss-1) (White mold), this protein is Acireductone dioxygenase (adi1).